The sequence spans 83 residues: Putative snRNP Sm-like protein (83 aa).

Residues 9 to 81 (KPMDVLKSAL…VIFVSPSKGD (73 aa)) form the Sm domain.

Belongs to the snRNP Sm proteins family.

The chain is Putative snRNP Sm-like protein from Thermoplasma acidophilum (strain ATCC 25905 / DSM 1728 / JCM 9062 / NBRC 15155 / AMRC-C165).